The following is a 260-amino-acid chain: Acidic leucine-rich nuclear phosphoprotein 32 family member E (260 aa).

Position 1 is an N-acetylmethionine (Met1). LRR repeat units follow at residues 18 to 38 (EVTELVLDNCLCVNGEIEGLN), 43 to 64 (ELEFLSMANVELSSLARLPSLN), 65 to 87 (KLRKLELSDNIISGGLEVLAEKC), and 89 to 110 (NLTYLNLSGNKIKDLSTVEALQ). Lys68 is covalently cross-linked (Glycyl lysine isopeptide (Lys-Gly) (interchain with G-Cter in SUMO2)). Residues 123 to 161 (CEITNLEDYRESIFELLQQITYLDGFDQEDNEAPDSEEE) form the LRRCT domain. 2 stretches are compositionally biased toward acidic residues: residues 149–208 (DQED…EEEV) and 218–240 (IQDEEDDDDYVDEGEEEEEEEEE). A disordered region spans residues 149-260 (DQEDNEAPDS…AEDDGEEDDD (112 aa)). The tract at residues 207 to 260 (EVGLSYLMKDEIQDEEDDDDYVDEGEEEEEEEEEGLRGEKRKRDAEDDGEEDDD) is ZID domain. A compositionally biased stretch (basic and acidic residues) spans 241–251 (GLRGEKRKRDA).

Belongs to the ANP32 family. Component of a SWR1-like complex, composed of EP400, KAT5/TIP60, TRRAP, BRD8, RUVBL1, RUVBL2, ING3 and ANP32E; the complex does not contain SRCAP. Interacts with H2A.Z/H2AZ1. Interacts with the importin alpha KPNA1 and KPNA2. Post-translationally, phosphorylated. The phosphorylation is nuclear localization signal (NLS)-dependent. In terms of tissue distribution, expressed at highest levels in cerebellum and spleen. In the cerebellum, expressed mainly in granule cells and, to a lesser extent, in Purkinje cells.

Its subcellular location is the cytoplasm. The protein resides in the nucleus. Functionally, histone chaperone that specifically mediates the genome-wide removal of histone H2A.Z/H2AZ1 from the nucleosome: removes H2A.Z/H2AZ1 from its normal sites of deposition, especially from enhancer and insulator regions. Not involved in deposition of H2A.Z/H2AZ1 in the nucleosome. May stabilize the evicted H2A.Z/H2AZ1-H2B dimer, thus shifting the equilibrium towards dissociation and the off-chromatin state. Inhibits activity of protein phosphatase 2A (PP2A). Does not inhibit protein phosphatase 1. May play a role in cerebellar development and synaptogenesis. The polypeptide is Acidic leucine-rich nuclear phosphoprotein 32 family member E (Anp32e) (Mus musculus (Mouse)).